A 579-amino-acid chain; its full sequence is MSETLATDATTPAEKKDFIRQIVREDLASGKHTVIRTRFPPEPNGYLHIGHAKAICLDFGLAAEFGGLCNLRLDDTNPAKEDPEFAAAIQDDVRWLGYDWAQLRHASDYFEVYYLAAQKLIRDGHAFVCDLSAEQVRQYRGTLTEPGRHSPFRERSVEENLDLFQRMRAGEFPDGARTLRAKIDMASGNINLRDPALYRIKHVEHQNTGNAWPIYPMYDFAHSLGDAVEGITHSLCTLEFEDHRPLYDWCVDKVDLVGHPELLQPLLDKGLPREAAKPRQIEFSRLNINYTVMSKRKLTALVEEQLVDGWDDPRMYTLQGLRRRGYTPAAMRLFVERVGISKQNSLIDFSVLEGCLREDLDAAAARRMAVIDPLKLVLTNLPEGHTETLQFSNHPKDESFGTREVPFARVLWIEREDFAEVPPKGWKRLVPGGEIRLRGAGIARVDEVIKNADGDIVALRGWLDPESRPGMEGANRKVKGTIHWVSAAHAVEAEIRLYDRLFSVEKPDDESEGKTYRDYLNPESKRNVRGYVEPSAALAAPEQAFQFERTGYFVADSRDHSASTPVFNRSVTLRDAWAK.

The short motif at 41–51 (PEPNGYLHIGH) is the 'HIGH' region element. Residues 42-44 (EPN) and 48-54 (HIGHAKA) each bind ATP. Aspartate 74 and tyrosine 218 together coordinate L-glutamine. Residues threonine 237, 285–286 (RL), and 293–295 (MSK) each bind ATP. Positions 292–296 (VMSKR) match the 'KMSKS' region motif.

This sequence belongs to the class-I aminoacyl-tRNA synthetase family. As to quaternary structure, monomer.

It localises to the cytoplasm. The enzyme catalyses tRNA(Gln) + L-glutamine + ATP = L-glutaminyl-tRNA(Gln) + AMP + diphosphate. This is Glutamine--tRNA ligase from Xanthomonas oryzae pv. oryzae (strain MAFF 311018).